A 914-amino-acid chain; its full sequence is Valine--tRNA ligase (914 aa).

The short motif at 45–55 (PNVTGSLHMGH) is the 'HIGH' region element. Residues 538 to 542 (KMSKS) carry the 'KMSKS' region motif. Lysine 541 contacts ATP. A coiled-coil region spans residues 847–914 (LVDLDALKGR…LARKRLADLS (68 aa)).

Belongs to the class-I aminoacyl-tRNA synthetase family. ValS type 1 subfamily. In terms of assembly, monomer.

It localises to the cytoplasm. The catalysed reaction is tRNA(Val) + L-valine + ATP = L-valyl-tRNA(Val) + AMP + diphosphate. In terms of biological role, catalyzes the attachment of valine to tRNA(Val). As ValRS can inadvertently accommodate and process structurally similar amino acids such as threonine, to avoid such errors, it has a 'posttransfer' editing activity that hydrolyzes mischarged Thr-tRNA(Val) in a tRNA-dependent manner. This is Valine--tRNA ligase from Parasynechococcus marenigrum (strain WH8102).